The following is a 283-amino-acid chain: 2-dehydro-3-deoxyphosphooctonate aldolase (283 aa).

The protein belongs to the KdsA family.

The protein resides in the cytoplasm. It carries out the reaction D-arabinose 5-phosphate + phosphoenolpyruvate + H2O = 3-deoxy-alpha-D-manno-2-octulosonate-8-phosphate + phosphate. It functions in the pathway carbohydrate biosynthesis; 3-deoxy-D-manno-octulosonate biosynthesis; 3-deoxy-D-manno-octulosonate from D-ribulose 5-phosphate: step 2/3. Its pathway is bacterial outer membrane biogenesis; lipopolysaccharide biosynthesis. The polypeptide is 2-dehydro-3-deoxyphosphooctonate aldolase (Shewanella frigidimarina (strain NCIMB 400)).